We begin with the raw amino-acid sequence, 124 residues long: Large ribosomal subunit protein bL12 (124 aa).

This sequence belongs to the bacterial ribosomal protein bL12 family. In terms of assembly, homodimer. Part of the ribosomal stalk of the 50S ribosomal subunit. Forms a multimeric L10(L12)X complex, where L10 forms an elongated spine to which 2 to 4 L12 dimers bind in a sequential fashion. Binds GTP-bound translation factors.

In terms of biological role, forms part of the ribosomal stalk which helps the ribosome interact with GTP-bound translation factors. Is thus essential for accurate translation. The sequence is that of Large ribosomal subunit protein bL12 from Cupriavidus pinatubonensis (strain JMP 134 / LMG 1197) (Cupriavidus necator (strain JMP 134)).